Reading from the N-terminus, the 215-residue chain is Osteoclast-stimulating factor 1 (215 aa).

N-acetylserine is present on serine 2. The SH3 domain occupies 12 to 71 (GQVKVFRALYTFEPRTPDELYFEEGDIIYITDMSDTSWWKGTCKGRTGLIPSNYVAEQAE). 3 ANK repeats span residues 72–101 (SIDN…GVNG), 105–135 (AGST…ELNQ), and 139–168 (LGDT…RTDL). The segment at 192 to 215 (KQQGTDGARTLSNAEDYLDDEDSD) is disordered. A Phosphothreonine modification is found at threonine 201. Residues serine 203 and serine 214 each carry the phosphoserine modification.

Interacts with C-SRC and SMN1. Interacts with FASLG.

It localises to the cytoplasm. Induces bone resorption, acting probably through a signaling cascade which results in the secretion of factor(s) enhancing osteoclast formation and activity. The sequence is that of Osteoclast-stimulating factor 1 (Ostf1) from Mus musculus (Mouse).